The following is a 479-amino-acid chain: Poly(A) polymerase catalytic subunit (479 aa).

Active-site residues include aspartate 202 and aspartate 204. 3 residues coordinate Ca(2+): aspartate 202, aspartate 204, and aspartate 253.

It belongs to the poxviridae poly(A) polymerase catalytic subunit family. As to quaternary structure, heterodimer of a large (catalytic) subunit and a small (regulatory) subunit.

It carries out the reaction RNA(n) + ATP = RNA(n)-3'-adenine ribonucleotide + diphosphate. Polymerase that creates the 3'-poly(A) tail of mRNA's. The protein is Poly(A) polymerase catalytic subunit (OPG063) of Homo sapiens (Human).